The sequence spans 372 residues: PqqA peptide cyclase (372 aa).

A Radical SAM core domain is found at 4–220; it reads APPPLSVLLE…ETARRQLGDR (217 aa). Residues cysteine 18, cysteine 22, and cysteine 25 each contribute to the [4Fe-4S] cluster site.

This sequence belongs to the radical SAM superfamily. PqqE family. As to quaternary structure, interacts with PqqD. The interaction is necessary for activity of PqqE. Requires [4Fe-4S] cluster as cofactor.

It carries out the reaction [PQQ precursor protein] + S-adenosyl-L-methionine = E-Y cross-linked-[PQQ precursor protein] + 5'-deoxyadenosine + L-methionine + H(+). It functions in the pathway cofactor biosynthesis; pyrroloquinoline quinone biosynthesis. Catalyzes the cross-linking of a glutamate residue and a tyrosine residue in the PqqA protein as part of the biosynthesis of pyrroloquinoline quinone (PQQ). The polypeptide is PqqA peptide cyclase (Xanthomonas axonopodis pv. citri (strain 306)).